A 483-amino-acid chain; its full sequence is MMLQRSCIVLFFSLFLLVPQMVFSMLNRTLLLIPHPDPELVAYQVQWKVNASITRRQALDTTDQAGSTPCITGNPIDDCWKCDPNWPNNRQGLADCGIGFGQYALGGKGGQFYFVTDSSDDDAVNPKPGTLRYGVIQEEPLWIVFPSNMMIKLKQELIFNSYKTLDGRGANVHIVGGGCITLQYVSNIIIHNIHIHHCYQSGNTNVRSSPTHYGFRTKSDGDGISIFGSKDIWIDHCSLSRCKDGLIDAVMGSTGITISNNFFSHHNEVMLLGHSDHYEPDSGMQVTIAFNHFGEKLIQRMPRCRRGYIHVVNNDFTQWEMYAIGGSGNPTINSQGNRYTAPTNPFAKEVTKRVETPDGDWKGWNWRSEGDILVNGAFFVASGEGAEMRYEKAYSVEPKSASFITQITFHSGVLGVGGRNNNLGMWTTTGSEGTSGLDSYNDYTDEMSGAGSTNRLSFSVLVFLLSSISYLVVFTSSTQMFML.

A signal peptide spans 1–24 (MMLQRSCIVLFFSLFLLVPQMVFS). Asn27 and Asn50 each carry an N-linked (GlcNAc...) asparagine glycan. The Ca(2+) site is built by Asp220, Asp244, and Asp248. Residue Arg300 is part of the active site.

This sequence belongs to the polysaccharide lyase 1 family. Requires Ca(2+) as cofactor.

It catalyses the reaction Eliminative cleavage of (1-&gt;4)-alpha-D-galacturonan to give oligosaccharides with 4-deoxy-alpha-D-galact-4-enuronosyl groups at their non-reducing ends.. It functions in the pathway glycan metabolism; pectin degradation; 2-dehydro-3-deoxy-D-gluconate from pectin: step 2/5. The sequence is that of Probable pectate lyase 12 from Arabidopsis thaliana (Mouse-ear cress).